Here is a 316-residue protein sequence, read N- to C-terminus: Olfactory receptor 10H3 (316 aa).

Over 1-25 (MPGQNYRTISEFILSGFSAFPQQLL) the chain is Extracellular. The helical transmembrane segment at 26 to 46 (PVLFLLYLLMFLFTLLGNLLI) threads the bilayer. Topologically, residues 47-54 (MATVWIER) are cytoplasmic. The chain crosses the membrane as a helical span at residues 55 to 75 (RLHTPMYLFLCALSISEILFT). Topologically, residues 76–99 (VAITPRMLADLLFTHRSITFVACA) are extracellular. Cys-98 and Cys-190 form a disulfide bridge. The helical transmembrane segment at 100–120 (IQMFFSFMFGFTHSFLLMVMG) threads the bilayer. The Cytoplasmic segment spans residues 121–139 (YDHYVTICHPLHYNMLMSP). Residues 140 to 160 (RGCAHLVAWTWAGGSVMGMMV) form a helical membrane-spanning segment. The Extracellular segment spans residues 161–197 (TMMVFHLTFCGSNVIHHFLCHVLSLLKLACGSKTSSV). The helical transmembrane segment at 198–218 (IMGVMLVCVTALIGCLFLIIL) threads the bilayer. The Cytoplasmic portion of the chain corresponds to 219 to 238 (SFVFIVAAILRIPSAEGRHK). The chain crosses the membrane as a helical span at residues 239-259 (TFSTCVSHLTVVVMHYSFASL). The Extracellular portion of the chain corresponds to 260 to 272 (IYLKPKGLHSMYS). A helical transmembrane segment spans residues 273-293 (DALMATTYTVFTPFLSPIIFS). Topologically, residues 294–316 (LRNKELKNAINKNFCRRFCPLSS) are cytoplasmic.

The protein belongs to the G-protein coupled receptor 1 family.

The protein resides in the cell membrane. Odorant receptor. This chain is Olfactory receptor 10H3 (OR10H3), found in Homo sapiens (Human).